Here is a 357-residue protein sequence, read N- to C-terminus: GDP-mannose transporter 2 (357 aa).

Topologically, residues 1-43 are cytoplasmic; the sequence is MASTRNGISKDELLPTYELQSQRDVENSGSVTSFASKISNNAA. The chain crosses the membrane as a helical span at residues 44 to 64; the sequence is AAVLAYCLSSISMTLVNKYVV. The Lumenal segment spans residues 65–68; sequence SGAS. Residues 69 to 89 form a helical membrane-spanning segment; sequence WNLSFLYLAIQSFIGTVAIMV. Over 90–107 the chain is Cytoplasmic; sequence CKKAGLIQNLGLFDLKKA. Residues 108–128 traverse the membrane as a helical segment; the sequence is QTWLPISLLLVGMIYTGNKAL. Residue glutamine 129 is a topological domain, lumenal. Residues 130–150 traverse the membrane as a helical segment; it reads FLSVPVYTIFKNLTIIVIAYG. Residues 151-161 are Cytoplasmic-facing; it reads EVFMVGGSVKP. Residues 162 to 182 traverse the membrane as a helical segment; the sequence is LALLSFGLMVLSSVVAAWADI. Topologically, residues 183–196 are lumenal; it reads QIATAATAKASSDS. Residues 197–217 form a helical membrane-spanning segment; the sequence is AVATLSALNAGYAWMGTNVVF. At 218 to 238 the chain is on the cytoplasmic side; it reads SASYALGMRRVIKKTNFDNWD. The chain crosses the membrane as a helical span at residues 239-259; sequence VMFYNNLLSVPILLLSSLLVE. Over 260-277 the chain is Lumenal; that stretch reads DWSSENLQRNFPAESRQS. A helical membrane pass occupies residues 278–298; it reads LVIGIFYSGVAAIFISYCTAW. The Cytoplasmic segment spans residues 299–306; the sequence is CVRATSST. Residues 307 to 327 traverse the membrane as a helical segment; it reads TYAMVGALNKLPLAVAGIVFF. At 328–332 the chain is on the lumenal side; that stretch reads AAPVT. The chain crosses the membrane as a helical span at residues 333-352; sequence FGSVSAIVLGFISGLVYTWA. Residues 353–357 are Cytoplasmic-facing; the sequence is KSTGA.

This sequence belongs to the TPT transporter family. SLC35D subfamily. Homooligomer.

It localises to the golgi apparatus membrane. The protein resides in the cytoplasmic vesicle membrane. Its subcellular location is the endoplasmic reticulum membrane. Involved in the import of GDP-mannose from the cytoplasm into the Golgi lumen. The polypeptide is GDP-mannose transporter 2 (gmt2) (Emericella nidulans (strain FGSC A4 / ATCC 38163 / CBS 112.46 / NRRL 194 / M139) (Aspergillus nidulans)).